Here is a 2748-residue protein sequence, read N- to C-terminus: MSHNNRHKKNNDKDSSAGQYANSIDNSLSQESVSTNGVTRMANLKADECGSGDEGDKTKRFSISSILSKRETKDVLPEFAGSSSHNGVLTANSSKDMNFTLELSENLLVECRKLQSSNEAKNEQIKSLKQIKESLSDKIEELTNQKKSFMKELDSTKDLNWDLESKLTNLSMECRQLKELKKKTEKSWNDEKESLKLLKTDLEILTLTKNGMENDLSSQKLHYDKEISELKERILDLNNENDRLLISVSDLTSEINSLQSNRTERIKIQKQLDDAKASISSLKRKVQKKYYQKQHTSDTTVTSDPDSEGTTSEEDIFDIVIEIDHMIETGPSVEDISEDLVKKYSEKNNMILLSNDSYKNLLQKSESASKPKDDELMTKEVAENLNMIALPNDDNYSKKEFSLESHIKYLEASGYKVLPLEEFENLNESLSNPSYNYLKEKLQALKKIPIDQSTFNLLKEPTIDFLLPLTSKIDCLIIPTKDYNDLFESVKNPSIEQMKKCLEAKNDLQSNICKWLEERNGCKWLSNDLYFSMVNKIETPSKQYLSDKAKEYDQVLIDTKALEGLKNPTIDFLREKASASDYLLLKKEDYVSPSLEYLVEHAKATNHHLLSDSAYEDLVKCKENPDMEFLKEKSAKLGHTVVSNEAYSELEKKLEQPSLEYLVEHAKATNHHLLSDSAYEDLVKCKENPDMEFLKEKSAKLGHTVVSNEAYSELQRKYSELEKEVEQPSLAYLVEHAKATDHHLLSDSAYEDLVKCKENPDVEFLKEKSAKLGHTVVSSEEYSELQRKYSELEKEVEQPSLAYLVEHAKATDHHLLSDSAYEELVKCKENPDMEFLKEKSAKLGHTVVSNEAYSELEKKLEQPSLAYLVEHAKATDHHLLSDSAYEDLVKCKENSDVEFLKEKSAKLGHTVVSNEAYSELEKKLEQPSLAYLVEHAKATDHHLLSDSAYEDLVKCKENPDMEFLKEKSAKLGHTVVSNEAYSELEKKLEQPSLEYLVEHAKATNHHLLSDSAYEDLVKCKENPDMEFLKEKSAKLGHTVVSNEAYSELEKKLEQPSLEYLVEHAKATNHHLLSDSAYEELVKCKENPDVEFLKEKSAKLGHTVVSNEAYSELEKKLEQPSLEYLVEHAKATNHHLLSDSAYEELVKCKENPDVEFLKEKSAKLGHTVVSNEAYSELEKKLEQPSLAYLVEHAKATDHHLLSDSAYEDLVKCKENPDVEFLKEKSAKLGHTVVSNEAYSELEKKLEQPSLAYLVEHAKATDHHLLSDSAYEDLVKCKENPDMEFLKEKSAKLGHTVVSNEAYSELEKKLEQPSLEYLVEHAKATNHHLLSDSAYEDLVKCKENPDMEFLKEKSAKLGHTVVSNKEYSELEKKLEQPSLEYLVKHAEQIQSKIISISDFNTLANPSMEDMASKLQKLEYQIVSNDEYIALKNTMEKPDVELLRSKLKGYHIIDTTTYNELVSNFNSPTLKFIEEKAKSKGYRLIEPNEYLDLNRIATTPSKEEIDNFCKQIGCYALDSKEYERLKNSLENPSKKFIEENAALLDLVLVDKTEYQAMKDNASNKKSLIPSTKALDFVTMPAPQLASAEKSSLQKRTLSDIENELKALGYVAIRKENLPNLEKPIVDNASKNDVLNLCSKFSLVPLSTEEYDNMRKEHTKILNILGDPSIDFLKEKCEKYQMLIISKHDYEEKQEAIENPGYEFILEKASALGYELVSEVELDRMKQMIDSPDIDYMQEKAARNEMVLLRNEEKEALQKKIEYPSLTFLIEKAAGMNKILVDQIEYDETIRKCNHPTRMELEESCHHLNLVLLDQNEYSTLREPLENRNVEDLINTLSKLNYIAIPNTIYQDLIGKYENPNFDYLKDSLNKMDYVAISRQDYELMVAKYEKPQLDYLKISSEKIDHIVVPLSEYNLMVTNYRNPSLSYLKEKAVLNNHILIKEDDYKNILAVSEHPTVIHLSEKASLLNKVLVDKDDFATMSRSIEKPTIDFLSTKALSMGKILVNESTHKRNEKLLSEPDSEFLTMKAKEQGLIIISEKEYSELRDQIDRPSLDVLKEKAAIFDSIIVENIEYQQLVNTTSPCPPITYEDLKVYAHQFGMELCLQKPNKLSGAERAERIDEQSINTTSSNSTTTSSMFTDALDDNIEELNRVELQNNEDYTDIISKSSTVKDATIFIPAYENIKNSAEKLGYKLVPFEKSNINLKNIEAPLFSKDNDDTSVASSIDLDHLSRKAEKYGMTLISDQEFEEYHILKDNAVNLNGGMEEMNNPLSENQNLAAKTTNTAQEGAFQNTVPHNDMDNEEVEYGPDDPTFTVRQLKKPAGDRNLILTSREKTLLSRDDNIMSQNEAVYGDDISDSFVDESQEIKNDVDIIKTQAMKYGMLCIPESNFVGASYASAQDMSDIVVLSASYYHNLMSPEDMKWNCVSNEELQAEVKKRGLQIALTTKEDKKGQATASKHEYVSHKLNNKTSTVSTKSGAKKGLAEAAATTAYEDSESHPQIEEQSHRTNHHKHHKRQQSLNSNSTSKTTHSSRNTPASRRDIVASFMSRAGSASRTASLQTLASLNEPSIIPALTQTVIGEYLFKYYPRLGPFGFESRHERFFWVHPYTLTLYWSASNPILENPANTKTKGVAILGVESVTDPNPYPTGLYHKSIVVTTETRTIKFTCPTRQRHNIWYNSLRYLLQRNMQGISLEDIADDPTDNMYSGKIFPLPGENTKSSSKRLSASRRSVSTRSLRHRVPQSRSFGNLR.

Positions 1-10 are enriched in basic residues; it reads MSHNNRHKKN. 2 disordered regions span residues 1-36 and 290-312; these read MSHN…VSTN and YYQK…GTTS. The segment covering 17–36 has biased composition (polar residues); it reads AGQYANSIDNSLSQESVSTN. A compositionally biased stretch (low complexity) spans 293-304; it reads KQHTSDTTVTSD. 12 tandem repeats follow at residues 593 to 656, 657 to 727, 728 to 798, 799 to 862, 863 to 926, 927 to 990, 991 to 1054, 1055 to 1118, 1119 to 1182, 1183 to 1246, 1247 to 1310, and 1311 to 1374. Residues 593 to 1384 form a 13 X tandem repeats region; sequence PSLEYLVEHA…PSLEYLVKHA (792 aa). Phosphoserine is present on residues S611, S675, and S746. A phosphoserine mark is found at S881, S945, and S1009. Phosphoserine occurs at positions 1201, 1265, and 1329. Residues 1375–1384 form a 13; truncated repeat; that stretch reads PSLEYLVKHA. The segment at 2111 to 2133 is disordered; sequence ERAERIDEQSINTTSSNSTTTSS. The span at 2122–2133 shows a compositional bias: low complexity; sequence NTTSSNSTTTSS. Residues S2162, S2164, S2197, S2217, S2220, S2221, S2360, and S2424 each carry the phosphoserine modification. The span at 2444-2460 shows a compositional bias: basic and acidic residues; sequence KEDKKGQATASKHEYVS. The tract at residues 2444–2536 is disordered; that stretch reads KEDKKGQATA…HSSRNTPASR (93 aa). Polar residues predominate over residues 2465 to 2474; sequence NKTSTVSTKS. The segment covering 2492–2503 has biased composition (basic and acidic residues); it reads SESHPQIEEQSH. S2494 bears the Phosphoserine mark. The segment covering 2504 to 2514 has biased composition (basic residues); sequence RTNHHKHHKRQ. Residues 2516 to 2532 show a composition bias toward low complexity; sequence SLNSNSTSKTTHSSRNT. At S2545 the chain carries Phosphoserine. The PH domain occupies 2573 to 2683; it reads QTVIGEYLFK…WYNSLRYLLQ (111 aa). A disordered region spans residues 2707–2748; that stretch reads IFPLPGENTKSSSKRLSASRRSVSTRSLRHRVPQSRSFGNLR. A compositionally biased stretch (low complexity) spans 2720–2730; sequence KRLSASRRSVS.

In terms of assembly, interacts with PAC11 when DYN1 is present, and TUB3.

Its subcellular location is the bud tip. In terms of biological role, controls nuclear migration. NUM1 specifically controls the interaction of the bud neck cytoskeleton with the pre-divisional G2 nucleus. Functions in dynein-anchoring. During late anaphase forms dynein-interacting cortical microtubule capture sites at both cellular poles. This leads to dynein-dependent sliding of the microtubules in the bud. The chain is Nuclear migration protein NUM1 (NUM1) from Saccharomyces cerevisiae (strain ATCC 204508 / S288c) (Baker's yeast).